The chain runs to 53 residues: Large ribosomal subunit protein bL33 (53 aa).

This sequence belongs to the bacterial ribosomal protein bL33 family.

In Blochmanniella floridana, this protein is Large ribosomal subunit protein bL33.